The chain runs to 321 residues: Aspartate carbamoyltransferase catalytic subunit (321 aa).

Carbamoyl phosphate is bound by residues R64 and T65. Residue K92 coordinates L-aspartate. Carbamoyl phosphate-binding residues include R114, H142, and Q145. Residues R175 and R229 each contribute to the L-aspartate site. G270 and P271 together coordinate carbamoyl phosphate.

Belongs to the aspartate/ornithine carbamoyltransferase superfamily. ATCase family. As to quaternary structure, heterododecamer (2C3:3R2) of six catalytic PyrB chains organized as two trimers (C3), and six regulatory PyrI chains organized as three dimers (R2).

It carries out the reaction carbamoyl phosphate + L-aspartate = N-carbamoyl-L-aspartate + phosphate + H(+). It participates in pyrimidine metabolism; UMP biosynthesis via de novo pathway; (S)-dihydroorotate from bicarbonate: step 2/3. Its function is as follows. Catalyzes the condensation of carbamoyl phosphate and aspartate to form carbamoyl aspartate and inorganic phosphate, the committed step in the de novo pyrimidine nucleotide biosynthesis pathway. The sequence is that of Aspartate carbamoyltransferase catalytic subunit from Azorhizobium caulinodans (strain ATCC 43989 / DSM 5975 / JCM 20966 / LMG 6465 / NBRC 14845 / NCIMB 13405 / ORS 571).